A 118-amino-acid chain; its full sequence is Ribonuclease P protein component 4 (118 aa).

The Zn(2+) site is built by Cys59, Cys62, Cys85, and Cys88.

It belongs to the eukaryotic/archaeal RNase P protein component 4 family. As to quaternary structure, consists of a catalytic RNA component and at least 4-5 protein subunits. Zn(2+) serves as cofactor.

Its subcellular location is the cytoplasm. It carries out the reaction Endonucleolytic cleavage of RNA, removing 5'-extranucleotides from tRNA precursor.. Part of ribonuclease P, a protein complex that generates mature tRNA molecules by cleaving their 5'-ends. The protein is Ribonuclease P protein component 4 of Sulfolobus acidocaldarius (strain ATCC 33909 / DSM 639 / JCM 8929 / NBRC 15157 / NCIMB 11770).